We begin with the raw amino-acid sequence, 724 residues long: 1,4-alpha-glucan branching enzyme GlgB 1 (724 aa).

Asp-403 functions as the Nucleophile in the catalytic mechanism. Glu-456 serves as the catalytic Proton donor.

The protein belongs to the glycosyl hydrolase 13 family. GlgB subfamily. As to quaternary structure, monomer.

It catalyses the reaction Transfers a segment of a (1-&gt;4)-alpha-D-glucan chain to a primary hydroxy group in a similar glucan chain.. Its pathway is glycan biosynthesis; glycogen biosynthesis. Its function is as follows. Catalyzes the formation of the alpha-1,6-glucosidic linkages in glycogen by scission of a 1,4-alpha-linked oligosaccharide from growing alpha-1,4-glucan chains and the subsequent attachment of the oligosaccharide to the alpha-1,6 position. The sequence is that of 1,4-alpha-glucan branching enzyme GlgB 1 (glgB1) from Xanthomonas axonopodis pv. citri (strain 306).